We begin with the raw amino-acid sequence, 203 residues long: Akirin-2 (203 aa).

2 positions are modified to phosphoserine: S18 and S21. Residues 22–27 carry the Nuclear localization signal motif; the sequence is PKRRRC. S57 carries the post-translational modification Phosphoserine. The SYVS motif signature appears at 200–203; that stretch reads SYVS.

It belongs to the akirin family. In terms of assembly, homodimer. Interacts with IPO9; the interaction is direct. Associates (via SYVS motif) with 20S and 26S proteasomes. Interacts with SMARCD1; promoting SWI/SNF complex recruitment. Interacts with NFKBIZ. Interacts with YWHAB. In terms of processing, polyubiquitinated. Polyubiquitination is dependent of UBR5 that extends pre-ubiquitinated AKIRIN2. Widely expressed with the highest expression in peripheral blood leukocytes.

The protein localises to the nucleus. The protein resides in the cytoplasm. It localises to the membrane. In terms of biological role, molecular adapter that acts as a bridge between a variety of multiprotein complexes, and which is involved in embryonic development, immunity, myogenesis and brain development. Plays a key role in nuclear protein degradation by promoting import of proteasomes into the nucleus: directly binds to fully assembled 20S proteasomes at one end and to nuclear import receptor IPO9 at the other end, bridging them together and mediating the import of pre-assembled proteasome complexes through the nuclear pore. Involved in innate immunity by regulating the production of interleukin-6 (IL6) downstream of Toll-like receptor (TLR): acts by bridging the NF-kappa-B inhibitor NFKBIZ and the SWI/SNF complex, leading to promote induction of IL6. Also involved in adaptive immunity by promoting B-cell activation. Involved in brain development: required for the survival and proliferation of cerebral cortical progenitor cells. Involved in myogenesis: required for skeletal muscle formation and skeletal development, possibly by regulating expression of muscle differentiation factors. Also plays a role in facilitating interdigital tissue regression during limb development. This Homo sapiens (Human) protein is Akirin-2.